The chain runs to 316 residues: GTP cyclohydrolase FolE2 1 (316 aa).

The protein belongs to the GTP cyclohydrolase IV family.

The catalysed reaction is GTP + H2O = 7,8-dihydroneopterin 3'-triphosphate + formate + H(+). Its pathway is cofactor biosynthesis; 7,8-dihydroneopterin triphosphate biosynthesis; 7,8-dihydroneopterin triphosphate from GTP: step 1/1. Its function is as follows. Converts GTP to 7,8-dihydroneopterin triphosphate. In Burkholderia orbicola (strain AU 1054), this protein is GTP cyclohydrolase FolE2 1.